A 159-amino-acid polypeptide reads, in one-letter code: tRNA-specific adenosine deaminase (159 aa).

In terms of domain architecture, CMP/dCMP-type deaminase spans 6–133 (EEQTYFMQEA…ERLNHRVQVE (128 aa)). Histidine 57 provides a ligand contact to Zn(2+). Catalysis depends on glutamate 59, which acts as the Proton donor. Residues cysteine 87 and cysteine 90 each coordinate Zn(2+).

It belongs to the cytidine and deoxycytidylate deaminase family. Homodimer. Zn(2+) is required as a cofactor.

The enzyme catalyses adenosine(34) in tRNA + H2O + H(+) = inosine(34) in tRNA + NH4(+). In terms of biological role, catalyzes the deamination of adenosine to inosine at the wobble position 34 of tRNA(Arg2). The polypeptide is tRNA-specific adenosine deaminase (Streptococcus pyogenes serotype M18 (strain MGAS8232)).